The chain runs to 578 residues: MPRGLELLIAQTILQGFDAQYGRFLEVTSGAQQRFEQADWHAVQQAMKNRIHLYDHHVGLVVEQLRCITNGQSTDAEFLLRVKEHYTRLLPDYPRFEIAESFFNSVYCRLFDHRSLTPERLFIFSSQPERRFRTIPRPLAKDFHPDHGWESLLMRVISDLPLRLHWQNKSRDIHYIIRHLTETLGPENLSKSHLQVANELFYRNKAAWLVGKLITPSGTLPFLLPIHQTDDGELFIDTCLTTTAEASIVFGFARSYFMVYAPLPAALVEWLREILPGKTTAELYMAIGCQKHAKTESYREYLVYLQGCNEQFIEAPGIRGMVMLVFTLPGFDRVFKVIKDKFAPQKEMSAAHVRACYQLVKEHDRVGRMADTQEFENFVLEKRHISPALMELLLQEAAEKITDLGEQIVIRHLYIERRMVPLNIWLEQVEGQQLRDAIEEYGNAIRQLAAANIFPGDMLFKNFGVTRHGRVVFYDYDEICYMTEVNFRDIPPPRYPEDELASEPWYSVSPGDVFPEEFRHWLCADPRIGPLFEEMHADLFRADYWRALQNRIREGHVEDVYAYRRRQRFSVRYGEMLF.

ATP is bound by residues 315 to 321 (APGIRGM) and Lys336. Asp371 is a catalytic residue.

It belongs to the AceK family.

Its subcellular location is the cytoplasm. The catalysed reaction is L-seryl-[isocitrate dehydrogenase] + ATP = O-phospho-L-seryl-[isocitrate dehydrogenase] + ADP + H(+). In terms of biological role, bifunctional enzyme which can phosphorylate or dephosphorylate isocitrate dehydrogenase (IDH) on a specific serine residue. This is a regulatory mechanism which enables bacteria to bypass the Krebs cycle via the glyoxylate shunt in response to the source of carbon. When bacteria are grown on glucose, IDH is fully active and unphosphorylated, but when grown on acetate or ethanol, the activity of IDH declines drastically concomitant with its phosphorylation. The protein is Isocitrate dehydrogenase kinase/phosphatase of Escherichia coli O157:H7.